The sequence spans 278 residues: Large ribosomal subunit protein uL2 (278 aa).

Disordered regions lie at residues 1 to 58 and 224 to 278; these read MAIR…GGGH and VVMN…GKKR. The segment covering 23–33 has biased composition (basic and acidic residues); that stretch reads EITRDHPEKSL. A compositionally biased stretch (basic residues) spans 37 to 58; the sequence is LHGRGGRNAHGRITTRHKGGGH. A compositionally biased stretch (basic and acidic residues) spans 253–268; that stretch reads PEGRTRKPKKASDKLI. A compositionally biased stretch (basic residues) spans 269 to 278; that stretch reads VRRRRTGKKR.

The protein belongs to the universal ribosomal protein uL2 family. Part of the 50S ribosomal subunit. Forms a bridge to the 30S subunit in the 70S ribosome.

Functionally, one of the primary rRNA binding proteins. Required for association of the 30S and 50S subunits to form the 70S ribosome, for tRNA binding and peptide bond formation. It has been suggested to have peptidyltransferase activity; this is somewhat controversial. Makes several contacts with the 16S rRNA in the 70S ribosome. The sequence is that of Large ribosomal subunit protein uL2 from Mycolicibacterium vanbaalenii (strain DSM 7251 / JCM 13017 / BCRC 16820 / KCTC 9966 / NRRL B-24157 / PYR-1) (Mycobacterium vanbaalenii).